A 172-amino-acid polypeptide reads, in one-letter code: Large ribosomal subunit protein uL10 (172 aa).

It belongs to the universal ribosomal protein uL10 family. Part of the ribosomal stalk of the 50S ribosomal subunit. The N-terminus interacts with L11 and the large rRNA to form the base of the stalk. The C-terminus forms an elongated spine to which L12 dimers bind in a sequential fashion forming a multimeric L10(L12)X complex.

Functionally, forms part of the ribosomal stalk, playing a central role in the interaction of the ribosome with GTP-bound translation factors. The protein is Large ribosomal subunit protein uL10 of Brucella anthropi (strain ATCC 49188 / DSM 6882 / CCUG 24695 / JCM 21032 / LMG 3331 / NBRC 15819 / NCTC 12168 / Alc 37) (Ochrobactrum anthropi).